A 138-amino-acid chain; its full sequence is Small ribosomal subunit protein bS6 (138 aa).

Residues 100–138 (SPLAKGREEDDSDSSARRARDDSDDDGDDDEDDRRASAD) form a disordered region. Acidic residues predominate over residues 121–131 (DSDDDGDDDED).

This sequence belongs to the bacterial ribosomal protein bS6 family.

Its function is as follows. Binds together with bS18 to 16S ribosomal RNA. The sequence is that of Small ribosomal subunit protein bS6 from Thioalkalivibrio sulfidiphilus (strain HL-EbGR7).